The sequence spans 122 residues: Large ribosomal subunit protein uL14 (122 aa).

The protein belongs to the universal ribosomal protein uL14 family. In terms of assembly, part of the 50S ribosomal subunit. Forms a cluster with proteins L3 and L19. In the 70S ribosome, L14 and L19 interact and together make contacts with the 16S rRNA in bridges B5 and B8.

Binds to 23S rRNA. Forms part of two intersubunit bridges in the 70S ribosome. This Roseiflexus castenholzii (strain DSM 13941 / HLO8) protein is Large ribosomal subunit protein uL14.